The chain runs to 173 residues: Photosystem I assembly protein Ycf3 (173 aa).

TPR repeat units lie at residues 35-68 (AFSY…EEDP), 72-105 (SYIL…NFKL), and 120-153 (GVQA…APDN).

It belongs to the Ycf3 family.

The protein resides in the plastid. The protein localises to the chloroplast thylakoid membrane. Essential for the assembly of the photosystem I (PSI) complex. May act as a chaperone-like factor to guide the assembly of the PSI subunits. The chain is Photosystem I assembly protein Ycf3 from Pyropia yezoensis (Susabi-nori).